The following is a 1239-amino-acid chain: Anion exchange protein 2 (1239 aa).

Residues 1 to 237 (MSSAPRRPAK…HRSYNLQERR (237 aa)) are disordered. At 1 to 706 (MSSAPRRPAK…DFRDALDPQC (706 aa)) the chain is on the cytoplasmic side. Composition is skewed to basic and acidic residues over residues 37–49 (ELHRTLGVERFEE) and 58–75 (GGEEPGRSYGEEDFEYHR). Composition is skewed to basic residues over residues 76-85 (QSSHHIHHPL) and 94-110 (RRRKTPQGPGRKPRRRP). Phosphoserine occurs at positions 113, 132, 144, 170, and 172. Residues 120 to 133 (TIEEGEEDEDEASE) are compositionally biased toward acidic residues. Low complexity predominate over residues 141-155 (TQPSPVSTPSSVQFF). Positions 189 to 207 (GAQAGTQVEEAEAVAVASG) are enriched in low complexity. Residues 208–217 (TAGGDDGGAS) are compositionally biased toward gly residues. Ser241 is modified (phosphoserine). Residue Thr255 is modified to Phosphothreonine. Lys272 carries the N6-methyllysine modification. Residues 285 to 318 (HLVRKNAKGSTQSGREGREPGPTPRARPRAPHKP) form a disordered region. At Ser441 the chain carries Phosphoserine. Positions 447-468 (SLLGHHHGQGAESDPHVTEPLI) are disordered. Membrane (anion exchange) regions lie at residues 706–1239 (CLAA…PMPV) and 708–1239 (AAVI…PMPV). A run of 4 helical transmembrane segments spans residues 707–727 (LAAVIFIYFAALSPAITFGGL), 752–772 (FCLLGAQPLLVIGFSGPLLVF), 794–814 (IGFWLVLLALLMVALEGSFLV), and 824–844 (IFAFLISLIFIYETFYKLVKI). Residues 845–895 (FQEHPLHGCSASNSSEVDGGENMTWAVARPTLGPGNRSLAGQSGQGKPRGQ) are Extracellular-facing. N-linked (GlcNAc...) asparagine glycosylation is found at Asn857, Asn866, and Asn880. Residues 896 to 916 (PNTALLSLVLMAGTFFIAFFL) traverse the membrane as a helical segment. At 917–931 (RKFKNSRFFPGRIRR) the chain is on the cytoplasmic side. A run of 5 helical transmembrane segments spans residues 932–952 (VIGDFGVPIAILIMVLVDYSI), 987–1007 (FPVWMMVASLLPAILVFILIF), 1034–1054 (LLLIVAMGGICALFGLPWLAA), 1088–1108 (RVTGLLVALLVGLSIVIGDLL), and 1111–1131 (IPLAVLFGIFLYMGVTSLNGI). Cys1171 is lipidated: S-palmitoyl cysteine. The helical transmembrane segment at 1172–1192 (LALLWAVMSTAASLAFPFILI) threads the bilayer.

The protein belongs to the anion exchanger (TC 2.A.31) family.

It localises to the apical cell membrane. Its subcellular location is the basolateral cell membrane. It catalyses the reaction hydrogencarbonate(in) + chloride(out) = hydrogencarbonate(out) + chloride(in). In terms of biological role, sodium-independent anion exchanger which mediates the electroneutral exchange of chloride for bicarbonate ions across the cell membrane. Plays an important role in osteoclast differentiation and function. Regulates bone resorption and calpain-dependent actin cytoskeleton organization in osteoclasts via anion exchange-dependent control of pH. Essential for intracellular pH regulation in CD8(+) T-cells upon CD3 stimulation, modulating CD8(+) T-cell response. In Pongo abelii (Sumatran orangutan), this protein is Anion exchange protein 2 (SLC4A2).